A 448-amino-acid polypeptide reads, in one-letter code: Adenylosuccinate synthetase (448 aa).

GTP is bound by residues 22-28 (GDEGKGK) and 50-52 (GHT). The active-site Proton acceptor is Asp23. The Mg(2+) site is built by Asp23 and Gly50. IMP contacts are provided by residues 23-26 (DEGK), 48-51 (NAGH), Thr139, Arg153, Gln234, Thr249, and Arg321. The Proton donor role is filled by His51. 317-323 (SVTGRPR) provides a ligand contact to substrate. GTP contacts are provided by residues Arg323, 349–351 (KLD), and 431–433 (STG).

It belongs to the adenylosuccinate synthetase family. As to quaternary structure, homodimer. Mg(2+) is required as a cofactor.

Its subcellular location is the cytoplasm. It carries out the reaction IMP + L-aspartate + GTP = N(6)-(1,2-dicarboxyethyl)-AMP + GDP + phosphate + 2 H(+). It functions in the pathway purine metabolism; AMP biosynthesis via de novo pathway; AMP from IMP: step 1/2. Its function is as follows. Plays an important role in the de novo pathway of purine nucleotide biosynthesis. Catalyzes the first committed step in the biosynthesis of AMP from IMP. The sequence is that of Adenylosuccinate synthetase from Paraburkholderia xenovorans (strain LB400).